We begin with the raw amino-acid sequence, 163 residues long: Small heat shock protein C4 (163 aa).

One can recognise a sHSP domain in the interval 53–163; it reads YNNKILSPRT…QSKAKKIKIS (111 aa).

This sequence belongs to the small heat shock protein (HSP20) family.

This is Small heat shock protein C4 (hspc4-1) from Rickettsia felis (strain ATCC VR-1525 / URRWXCal2) (Rickettsia azadi).